Here is an 822-residue protein sequence, read N- to C-terminus: Glycerol-3-phosphate acyltransferase (822 aa).

Positions 306 to 311 (CHRSHM) match the HXXXXD motif motif. Residues 803–822 (ASSSAEMEAESQAVEETTQE) form a disordered region.

The protein belongs to the GPAT/DAPAT family.

It localises to the cell inner membrane. The catalysed reaction is sn-glycerol 3-phosphate + an acyl-CoA = a 1-acyl-sn-glycero-3-phosphate + CoA. It functions in the pathway phospholipid metabolism; CDP-diacylglycerol biosynthesis; CDP-diacylglycerol from sn-glycerol 3-phosphate: step 1/3. The chain is Glycerol-3-phosphate acyltransferase from Pectobacterium carotovorum subsp. carotovorum (strain PC1).